The following is a 511-amino-acid chain: Exodeoxyribonuclease 7 large subunit (511 aa).

Belongs to the XseA family. In terms of assembly, heterooligomer composed of large and small subunits.

It is found in the cytoplasm. The catalysed reaction is Exonucleolytic cleavage in either 5'- to 3'- or 3'- to 5'-direction to yield nucleoside 5'-phosphates.. Bidirectionally degrades single-stranded DNA into large acid-insoluble oligonucleotides, which are then degraded further into small acid-soluble oligonucleotides. This Brucella ovis (strain ATCC 25840 / 63/290 / NCTC 10512) protein is Exodeoxyribonuclease 7 large subunit.